We begin with the raw amino-acid sequence, 90 residues long: Small ribosomal subunit protein uS19 (90 aa).

This sequence belongs to the universal ribosomal protein uS19 family.

Functionally, protein S19 forms a complex with S13 that binds strongly to the 16S ribosomal RNA. The sequence is that of Small ribosomal subunit protein uS19 from Mesomycoplasma hyopneumoniae (strain 232) (Mycoplasma hyopneumoniae).